Reading from the N-terminus, the 561-residue chain is Delta(24)-sterol reductase (561 aa).

Topologically, residues 1-25 are lumenal; that stretch reads MSDLQTPLVRPKRKKTWVDYFVKFR. The residue at position 2 (S2) is a Phosphoserine. The helical; Signal-anchor transmembrane segment at 26–46 threads the bilayer; it reads WIIVIFIVLPFSATFYFLIYL. The Cytoplasmic portion of the chain corresponds to 47 to 561; it reads GDMWSESKSF…HLETAYAEAD (515 aa). In terms of domain architecture, FAD-binding PCMH-type spans 49–232; sequence MWSESKSFEK…VAAEIRLIKV (184 aa). The tract at residues 518–539 is interaction with calmodulin; that stretch reads CRKKYRAIGTFMSVYYKSKKGR.

The protein belongs to the DIMINUTO family. As to quaternary structure, interacts with calmodulin.

It localises to the microsome membrane. The enzyme catalyses lathosterol + NADP(+) = 5alpha-cholesta-7,24-dien-3beta-ol + NADPH + H(+). Functionally, plays a critical role in the general process of plant cell elongation. Involved in the synthesis of campesterol, an early precursor of brassinolide. Required for the conversion of 24-methylenecholesterol to campesterol and for the conversion of isofucosterol to sitosterol. Necessary for both the isomerization and reduction of 24-methylenecholesterol. Regulates indirectly phytochrome-mediated light responses through the modulation of brassinosteroid biosynthesis. The polypeptide is Delta(24)-sterol reductase (DIM) (Arabidopsis thaliana (Mouse-ear cress)).